We begin with the raw amino-acid sequence, 379 residues long: Nitric oxide reductase FlRd-NAD(+) reductase (379 aa).

The protein belongs to the FAD-dependent oxidoreductase family. The cofactor is FAD.

Its subcellular location is the cytoplasm. The catalysed reaction is 2 reduced [nitric oxide reductase rubredoxin domain] + NAD(+) + H(+) = 2 oxidized [nitric oxide reductase rubredoxin domain] + NADH. Its pathway is nitrogen metabolism; nitric oxide reduction. Functionally, one of at least two accessory proteins for anaerobic nitric oxide (NO) reductase. Reduces the rubredoxin moiety of NO reductase. This chain is Nitric oxide reductase FlRd-NAD(+) reductase, found in Pectobacterium atrosepticum (strain SCRI 1043 / ATCC BAA-672) (Erwinia carotovora subsp. atroseptica).